Reading from the N-terminus, the 106-residue chain is Cell division topological specificity factor (106 aa).

Belongs to the MinE family.

Functionally, prevents the cell division inhibition by proteins MinC and MinD at internal division sites while permitting inhibition at polar sites. This ensures cell division at the proper site by restricting the formation of a division septum at the midpoint of the long axis of the cell. This chain is Cell division topological specificity factor, found in Prochlorococcus marinus (strain SARG / CCMP1375 / SS120).